The sequence spans 466 residues: 3-isopropylmalate dehydratase large subunit (466 aa).

[4Fe-4S] cluster is bound by residues C347, C407, and C410.

This sequence belongs to the aconitase/IPM isomerase family. LeuC type 1 subfamily. In terms of assembly, heterodimer of LeuC and LeuD. It depends on [4Fe-4S] cluster as a cofactor.

It catalyses the reaction (2R,3S)-3-isopropylmalate = (2S)-2-isopropylmalate. It functions in the pathway amino-acid biosynthesis; L-leucine biosynthesis; L-leucine from 3-methyl-2-oxobutanoate: step 2/4. Functionally, catalyzes the isomerization between 2-isopropylmalate and 3-isopropylmalate, via the formation of 2-isopropylmaleate. The sequence is that of 3-isopropylmalate dehydratase large subunit from Blochmanniella floridana.